A 204-amino-acid polypeptide reads, in one-letter code: Heart- and neural crest derivatives-expressed protein 1 (204 aa).

3 disordered regions span residues 1–24 (MNLVGSYAHHHHHHHHHHHPHPAH), 57–115 (APDF…RTES), and 172–204 (LKKADGGRESKRKRELQQHEGFPPALGPGEKRD). Composition is skewed to basic residues over residues 8-22 (AHHHHHHHHHHHPHP) and 98-110 (LGRRKGSGPKKER). In terms of domain architecture, bHLH spans 100-152 (RRKGSGPKKERRRTESINSAFAELRECIPNVPADTKLSKIKTLRLATSYIAYL). At Thr-113 the chain carries Phosphothreonine; by PLK4. Residue Ser-115 is modified to Phosphoserine; by PLK4.

As to quaternary structure, efficient DNA binding requires dimerization with another bHLH protein. Forms homodimers and heterodimers with TCF3 gene products E12 and E47, HAND2 and HEY1, HEY2 and HEYL (hairy-related transcription factors). Interacts with MDFIC. Interacts with SOX15; the interaction enhances HAND1-induced differentiation of trophoblast giant cells. In terms of processing, phosphorylation by PLK4 disrupts the interaction with MDFIC and leads to translocation into the nucleoplasm, allowing dimerization and transcription factor activity.

The protein resides in the nucleus. It localises to the nucleoplasm. The protein localises to the nucleolus. Its function is as follows. Transcription factor that plays an essential role in both trophoblast giant cell differentiation and in cardiac morphogenesis. Binds the DNA sequence 5'-NRTCTG-3' (non-canonical E-box). Acts as a transcriptional repressor of SOX15. In the adult, could be required for ongoing expression of cardiac-specific genes. This chain is Heart- and neural crest derivatives-expressed protein 1 (HAND1), found in Ovis aries (Sheep).